The primary structure comprises 316 residues: 4-hydroxy-3-methylbut-2-enyl diphosphate reductase (316 aa).

Residue Cys12 coordinates [4Fe-4S] cluster. 2 residues coordinate (2E)-4-hydroxy-3-methylbut-2-enyl diphosphate: His43 and His81. His43 and His81 together coordinate dimethylallyl diphosphate. Residues His43 and His81 each coordinate isopentenyl diphosphate. A [4Fe-4S] cluster-binding site is contributed by Cys103. His131 is a (2E)-4-hydroxy-3-methylbut-2-enyl diphosphate binding site. His131 lines the dimethylallyl diphosphate pocket. Isopentenyl diphosphate is bound at residue His131. The Proton donor role is filled by Glu133. Thr170 contributes to the (2E)-4-hydroxy-3-methylbut-2-enyl diphosphate binding site. Cys198 contributes to the [4Fe-4S] cluster binding site. Residues Ser226, Asn228, and Ser271 each coordinate (2E)-4-hydroxy-3-methylbut-2-enyl diphosphate. Dimethylallyl diphosphate is bound by residues Ser226, Asn228, and Ser271. Isopentenyl diphosphate-binding residues include Ser226, Asn228, and Ser271.

Belongs to the IspH family. It depends on [4Fe-4S] cluster as a cofactor.

The catalysed reaction is isopentenyl diphosphate + 2 oxidized [2Fe-2S]-[ferredoxin] + H2O = (2E)-4-hydroxy-3-methylbut-2-enyl diphosphate + 2 reduced [2Fe-2S]-[ferredoxin] + 2 H(+). It carries out the reaction dimethylallyl diphosphate + 2 oxidized [2Fe-2S]-[ferredoxin] + H2O = (2E)-4-hydroxy-3-methylbut-2-enyl diphosphate + 2 reduced [2Fe-2S]-[ferredoxin] + 2 H(+). The protein operates within isoprenoid biosynthesis; dimethylallyl diphosphate biosynthesis; dimethylallyl diphosphate from (2E)-4-hydroxy-3-methylbutenyl diphosphate: step 1/1. It participates in isoprenoid biosynthesis; isopentenyl diphosphate biosynthesis via DXP pathway; isopentenyl diphosphate from 1-deoxy-D-xylulose 5-phosphate: step 6/6. Catalyzes the conversion of 1-hydroxy-2-methyl-2-(E)-butenyl 4-diphosphate (HMBPP) into a mixture of isopentenyl diphosphate (IPP) and dimethylallyl diphosphate (DMAPP). Acts in the terminal step of the DOXP/MEP pathway for isoprenoid precursor biosynthesis. In Geobacillus thermodenitrificans (strain NG80-2), this protein is 4-hydroxy-3-methylbut-2-enyl diphosphate reductase.